A 432-amino-acid polypeptide reads, in one-letter code: Lysosomal acid phosphatase (432 aa).

The first 32 residues, 1 to 32 (MADGSCLGSGPQLGLIALLVVLLFSAVPLAQS), serve as a signal peptide directing secretion. Residues 33-384 (RELRFVTLVY…TTSFIMTEET (352 aa)) lie on the Lumenal side of the membrane. Catalysis depends on His-44, which acts as the Nucleophile. N-linked (GlcNAc...) asparagine glycosylation is found at Asn-94, Asn-135, Asn-179, Asn-193, and Asn-269. 3 disulfides stabilise this stretch: Cys-161–Cys-373, Cys-214–Cys-313, and Cys-348–Cys-352. The Proton donor role is filled by Asp-290. Residues Asn-325 and Asn-334 are each glycosylated (N-linked (GlcNAc...) asparagine). Residues 385 to 405 (IIGLTIGAIALFIIIVVLMLL) traverse the membrane as a helical segment. Topologically, residues 406–432 (SCNEPKDDGYQHVSDEGDDHETKGLAM) are cytoplasmic.

This sequence belongs to the histidine acid phosphatase family. The membrane-bound form is converted to the soluble form by sequential proteolytic processing. First, the C-terminal cytoplasmic tail is removed. Cleavage by a lysosomal protease releases the soluble form in the lysosome lumen.

The protein resides in the lysosome membrane. Its subcellular location is the lysosome lumen. The enzyme catalyses a phosphate monoester + H2O = an alcohol + phosphate. The protein is Lysosomal acid phosphatase (acp2) of Xenopus laevis (African clawed frog).